Here is a 251-residue protein sequence, read N- to C-terminus: Probable transcriptional regulatory protein MRA_2631 (251 aa).

This sequence belongs to the TACO1 family.

It is found in the cytoplasm. The protein is Probable transcriptional regulatory protein MRA_2631 of Mycobacterium tuberculosis (strain ATCC 25177 / H37Ra).